The sequence spans 195 residues: Pyridoxal 5'-phosphate synthase subunit PdxT (195 aa).

Glycine 46–serine 48 contributes to the L-glutamine binding site. The active-site Nucleophile is the cysteine 78. L-glutamine contacts are provided by residues arginine 105 and isoleucine 133–arginine 134. Active-site charge relay system residues include histidine 169 and glutamate 171.

It belongs to the glutaminase PdxT/SNO family. As to quaternary structure, in the presence of PdxS, forms a dodecamer of heterodimers. Only shows activity in the heterodimer.

It catalyses the reaction aldehydo-D-ribose 5-phosphate + D-glyceraldehyde 3-phosphate + L-glutamine = pyridoxal 5'-phosphate + L-glutamate + phosphate + 3 H2O + H(+). The enzyme catalyses L-glutamine + H2O = L-glutamate + NH4(+). Its pathway is cofactor biosynthesis; pyridoxal 5'-phosphate biosynthesis. Functionally, catalyzes the hydrolysis of glutamine to glutamate and ammonia as part of the biosynthesis of pyridoxal 5'-phosphate. The resulting ammonia molecule is channeled to the active site of PdxS. The chain is Pyridoxal 5'-phosphate synthase subunit PdxT from Shouchella clausii (strain KSM-K16) (Alkalihalobacillus clausii).